The chain runs to 233 residues: Orotidine 5'-phosphate decarboxylase (233 aa).

Residues D9, K31, 58-67 (DLKLHDIPNT), T120, R182, Q191, G211, and R212 contribute to the substrate site. The Proton donor role is filled by K60.

The protein belongs to the OMP decarboxylase family. Type 1 subfamily. In terms of assembly, homodimer.

The enzyme catalyses orotidine 5'-phosphate + H(+) = UMP + CO2. The protein operates within pyrimidine metabolism; UMP biosynthesis via de novo pathway; UMP from orotate: step 2/2. In terms of biological role, catalyzes the decarboxylation of orotidine 5'-monophosphate (OMP) to uridine 5'-monophosphate (UMP). The chain is Orotidine 5'-phosphate decarboxylase from Listeria monocytogenes serotype 4a (strain HCC23).